The chain runs to 122 residues: Small ribosomal subunit protein bS6 (122 aa).

Positions 96-122 are disordered; the sequence is ETAPSPMMKAVQKEDAAKSHRTEAPAA. The segment covering 106-122 has biased composition (basic and acidic residues); it reads VQKEDAAKSHRTEAPAA.

The protein belongs to the bacterial ribosomal protein bS6 family.

Binds together with bS18 to 16S ribosomal RNA. The chain is Small ribosomal subunit protein bS6 from Herminiimonas arsenicoxydans.